A 280-amino-acid chain; its full sequence is Tryptophan synthase alpha chain (280 aa).

Active-site proton acceptor residues include E50 and D61.

It belongs to the TrpA family. As to quaternary structure, tetramer of two alpha and two beta chains.

The enzyme catalyses (1S,2R)-1-C-(indol-3-yl)glycerol 3-phosphate + L-serine = D-glyceraldehyde 3-phosphate + L-tryptophan + H2O. The protein operates within amino-acid biosynthesis; L-tryptophan biosynthesis; L-tryptophan from chorismate: step 5/5. In terms of biological role, the alpha subunit is responsible for the aldol cleavage of indoleglycerol phosphate to indole and glyceraldehyde 3-phosphate. This chain is Tryptophan synthase alpha chain, found in Methylorubrum extorquens (strain PA1) (Methylobacterium extorquens).